The chain runs to 385 residues: MSVALAGNPASTSTQYEPLRVMIVDDSVVIRGLISRWIEAEPDMVVAASLRTGLDAVNQVERIKPDVAVLDIEMPELDGISALPKLLAKKRDLIIIMASTLTRRNAEISFKALSLGAADYIPKPESTREASAADIFKHDLLQKIRHLGGKVRRKASAASSTAAPALMREPAAPAHSVASQAALVKRPFGVTAPRVLLIGSSTGGPQALMSLVSEIGSVIDHYPVLITQHMPPTFTTILAEHLMRSARRPAHEGVDGEVVKSGQIYLAPGGRHMRVVRQGGQAVIALDDGPPVNFCKPAVDPLFNSAIDVWQSGILAVVLTGMGSDGMRGGKDIVAAGGSVIAQDEASSVVWGMPGAAANAGICAAVLPLNQIGPKLVRLFSGDRS.

The Response regulatory domain occupies 20–138; sequence RVMIVDDSVV…EASAADIFKH (119 aa). Asp71 carries the post-translational modification 4-aspartylphosphate. A CheB-type methylesterase domain is found at 189 to 383; that stretch reads GVTAPRVLLI…PKLVRLFSGD (195 aa). Residues Ser201, His229, and Asp325 contribute to the active site.

The protein belongs to the CheB family. Phosphorylated by CheA. Phosphorylation of the N-terminal regulatory domain activates the methylesterase activity.

The protein localises to the cytoplasm. It carries out the reaction [protein]-L-glutamate 5-O-methyl ester + H2O = L-glutamyl-[protein] + methanol + H(+). The catalysed reaction is L-glutaminyl-[protein] + H2O = L-glutamyl-[protein] + NH4(+). In terms of biological role, involved in chemotaxis. Part of a chemotaxis signal transduction system that modulates chemotaxis in response to various stimuli. Catalyzes the demethylation of specific methylglutamate residues introduced into the chemoreceptors (methyl-accepting chemotaxis proteins or MCP) by CheR. Also mediates the irreversible deamidation of specific glutamine residues to glutamic acid. The protein is Protein-glutamate methylesterase/protein-glutamine glutaminase of Rhodopseudomonas palustris (strain BisB5).